Reading from the N-terminus, the 436-residue chain is 3-ketoacyl-CoA thiolase (436 aa).

Cys-99 (acyl-thioester intermediate) is an active-site residue. Active-site proton acceptor residues include His-392 and Cys-422.

Belongs to the thiolase-like superfamily. Thiolase family. As to quaternary structure, heterotetramer of two alpha chains (FadJ) and two beta chains (FadI).

It localises to the cytoplasm. It carries out the reaction an acyl-CoA + acetyl-CoA = a 3-oxoacyl-CoA + CoA. Its pathway is lipid metabolism; fatty acid beta-oxidation. In terms of biological role, catalyzes the final step of fatty acid oxidation in which acetyl-CoA is released and the CoA ester of a fatty acid two carbons shorter is formed. The chain is 3-ketoacyl-CoA thiolase from Escherichia coli O7:K1 (strain IAI39 / ExPEC).